Consider the following 37-residue polypeptide: Large ribosomal subunit protein bL36c (37 aa).

Belongs to the bacterial ribosomal protein bL36 family.

It localises to the plastid. Its subcellular location is the chloroplast. The chain is Large ribosomal subunit protein bL36c (rpl36) from Porphyra purpurea (Red seaweed).